The primary structure comprises 136 residues: Large ribosomal subunit protein uL22 (136 aa).

This sequence belongs to the universal ribosomal protein uL22 family. Part of the 50S ribosomal subunit.

In terms of biological role, this protein binds specifically to 23S rRNA; its binding is stimulated by other ribosomal proteins, e.g. L4, L17, and L20. It is important during the early stages of 50S assembly. It makes multiple contacts with different domains of the 23S rRNA in the assembled 50S subunit and ribosome. The globular domain of the protein is located near the polypeptide exit tunnel on the outside of the subunit, while an extended beta-hairpin is found that lines the wall of the exit tunnel in the center of the 70S ribosome. The sequence is that of Large ribosomal subunit protein uL22 from Bacteroides fragilis (strain ATCC 25285 / DSM 2151 / CCUG 4856 / JCM 11019 / LMG 10263 / NCTC 9343 / Onslow / VPI 2553 / EN-2).